Reading from the N-terminus, the 308-residue chain is MYPFVSNHPTTHTSYSTMPGFSGLDDKSCSSRYTDSVMNSYPPMGVPGSASIAQFYQQAAAVSAASAGVGVDSLGSACSQLSSSVGGAQSGLPDITRHPWLVTASQSALQKFASTDWMSNPFDRVVCGDFAGPNGCPRRRGRQTYTRFQTLELEKEFHFNHYLTRRRRIEIAHALCLTERQIKIWFQNRRMKLKKELRAVKEINEQARREREEQDKMKNESLKSAQQHHSQKQAQQEHTVVGSQQTSNGGGTGGGTGGSGGAGSGGSSGNLGSHLHHPSIVSQNDLKLGLGGMGVGVGGNLSMMGAQT.

Residues 138–197 constitute a DNA-binding region (homeobox); that stretch reads RRRGRQTYTRFQTLELEKEFHFNHYLTRRRRIEIAHALCLTERQIKIWFQNRRMKLKKEL. The span at 207 to 221 shows a compositional bias: basic and acidic residues; that stretch reads ARREREEQDKMKNES. The disordered stretch occupies residues 207–277; it reads ARREREEQDK…SGNLGSHLHH (71 aa). Residues 223-247 are compositionally biased toward low complexity; sequence KSAQQHHSQKQAQQEHTVVGSQQTS. Over residues 248–269 the composition is skewed to gly residues; it reads NGGGTGGGTGGSGGAGSGGSSG.

The protein belongs to the Antp homeobox family.

The protein localises to the nucleus. In terms of biological role, sequence-specific transcription factor which is part of a developmental regulatory system that provides cells with specific positional identities on the anterior-posterior axis. The sequence is that of Homeobox protein abdominal-A homolog from Anopheles gambiae (African malaria mosquito).